The following is a 445-amino-acid chain: GTPase Der (445 aa).

EngA-type G domains are found at residues 3-167 and 180-353; these read PVIA…YADQ and IKIA…AAAM. GTP contacts are provided by residues 9–16, 56–60, 119–122, 186–193, 233–237, and 298–301; these read GRPNVGKS, DTGGF, NKAE, DTAGL, and NKWD. One can recognise a KH-like domain in the interval 354-438; that stretch reads AKLPTPKLTR…PLRIEFRSST (85 aa).

It belongs to the TRAFAC class TrmE-Era-EngA-EngB-Septin-like GTPase superfamily. EngA (Der) GTPase family. In terms of assembly, associates with the 50S ribosomal subunit.

Functionally, GTPase that plays an essential role in the late steps of ribosome biogenesis. This is GTPase Der from Burkholderia multivorans (strain ATCC 17616 / 249).